A 551-amino-acid chain; its full sequence is Inosine-5'-monophosphate dehydrogenase (551 aa).

CBS domains follow at residues 102–163 (FILD…PLSE) and 165–221 (MTSD…PLAS). NAD(+) is bound by residues 258–260 (DSS) and 308–310 (GMG). Positions 310 and 312 each coordinate K(+). S313 provides a ligand contact to IMP. Residue C315 coordinates K(+). The active-site Thioimidate intermediate is C315. Residues 349–351 (DGG), 372–373 (GS), and 396–400 (YRGMG) contribute to the IMP site. A disordered region spans residues 407-462 (AGTRRTASPPARGLRSPEASPSTAASSGGASRASALSEASPSAKSEASRTSTSTGS). Positions 422 to 462 (SPEASPSTAASSGGASRASALSEASPSAKSEASRTSTSTGS) are enriched in low complexity. The active-site Proton acceptor is the R465. Residue Q477 participates in IMP binding. E536 and G537 together coordinate K(+).

This sequence belongs to the IMPDH/GMPR family. Homotetramer. K(+) serves as cofactor.

It is found in the cytoplasm. It catalyses the reaction IMP + NAD(+) + H2O = XMP + NADH + H(+). It functions in the pathway purine metabolism; XMP biosynthesis via de novo pathway; XMP from IMP: step 1/1. Its activity is regulated as follows. Mycophenolic acid (MPA) is a non-competitive inhibitor that prevents formation of the closed enzyme conformation by binding to the same site as the amobile flap. In contrast, mizoribine monophosphate (MZP) is a competitive inhibitor that induces the closed conformation. MPA is a potent inhibitor of mammalian IMPDHs but a poor inhibitor of the bacterial enzymes. MZP is a more potent inhibitor of bacterial IMPDH. Potently inhibited by MPA and adenine dinucleotide analogs such as thiazole-4-carboxamide adenine dinucleotide (TAD). In terms of biological role, catalyzes the conversion of inosine 5'-phosphate (IMP) to xanthosine 5'-phosphate (XMP), the first committed and rate-limiting step in the de novo synthesis of guanine nucleotides, and therefore plays an important role in the regulation of cell growth. In Toxoplasma gondii, this protein is Inosine-5'-monophosphate dehydrogenase.